Here is a 365-residue protein sequence, read N- to C-terminus: Phosphate acyltransferase (365 aa).

It belongs to the PlsX family. As to quaternary structure, homodimer. Probably interacts with PlsY.

The protein resides in the cytoplasm. The enzyme catalyses a fatty acyl-[ACP] + phosphate = an acyl phosphate + holo-[ACP]. It participates in lipid metabolism; phospholipid metabolism. Functionally, catalyzes the reversible formation of acyl-phosphate (acyl-PO(4)) from acyl-[acyl-carrier-protein] (acyl-ACP). This enzyme utilizes acyl-ACP as fatty acyl donor, but not acyl-CoA. The chain is Phosphate acyltransferase from Jannaschia sp. (strain CCS1).